We begin with the raw amino-acid sequence, 356 residues long: Nicotinate-nucleotide--dimethylbenzimidazole phosphoribosyltransferase (356 aa).

The active-site Proton acceptor is the E317.

This sequence belongs to the CobT family. As to quaternary structure, homodimer.

The enzyme catalyses 5,6-dimethylbenzimidazole + nicotinate beta-D-ribonucleotide = alpha-ribazole 5'-phosphate + nicotinate + H(+). It participates in nucleoside biosynthesis; alpha-ribazole biosynthesis; alpha-ribazole from 5,6-dimethylbenzimidazole: step 1/2. Its function is as follows. Catalyzes the synthesis of alpha-ribazole-5'-phosphate from nicotinate mononucleotide (NAMN) and 5,6-dimethylbenzimidazole (DMB). In Salmonella agona (strain SL483), this protein is Nicotinate-nucleotide--dimethylbenzimidazole phosphoribosyltransferase.